The following is a 443-amino-acid chain: MADVTFISSSIVRPQIINQEGREKIHLTPFDLNLLYVDYTQRGLLFPKPDPETHFISRLRTSLSSALDIYFPFAGRLNKVENHEDETVSFYINCDGSGAKFIHAVSDSVSVSDLLRPDGSVPDFFRIFYPMNGVKSIDGLSEPLLALQVTEMRDGVFIGFGYNHMVADGASIWNFFRTWSKICSNGQRENLQPLALKGLFVDGMDFPIHIPVSDTETSPPSRELSPTFKERVFHFTKRNISDLKAKVNGEIGLRDHKVSSLQAVSAHMWRSIIRHSGLNQEEKTRCFVAVDLRQRLNPPLDKECFGHVIYNSVVTTTVGELHDQGLGWAFLQINNMLRSLTNEDYRIYAENWVRNMKIQKSGLGSKMTRDSVIVSSSPRFEVYDNDFGWGKPIAVRAGPSNSISGKLVFFRGIEEGCIDVHAFLLPDVLVKLLADVEFLEKCG.

Residues histidine 164 and aspartate 386 each act as proton acceptor in the active site.

The protein belongs to the plant acyltransferase family.

This is an uncharacterized protein from Arabidopsis thaliana (Mouse-ear cress).